The primary structure comprises 554 residues: Urocanate hydratase (554 aa).

NAD(+)-binding positions include 49–50 (GG), Gln-127, 173–175 (GMG), Glu-193, Arg-198, 239–240 (NA), 260–264 (QTSAH), 270–271 (YI), and Tyr-319. Cys-407 is an active-site residue. NAD(+) is bound at residue Gly-489.

This sequence belongs to the urocanase family. NAD(+) is required as a cofactor.

The protein resides in the cytoplasm. It catalyses the reaction 4-imidazolone-5-propanoate = trans-urocanate + H2O. It functions in the pathway amino-acid degradation; L-histidine degradation into L-glutamate; N-formimidoyl-L-glutamate from L-histidine: step 2/3. In terms of biological role, catalyzes the conversion of urocanate to 4-imidazolone-5-propionate. This is Urocanate hydratase from Bacillus velezensis (strain DSM 23117 / BGSC 10A6 / LMG 26770 / FZB42) (Bacillus amyloliquefaciens subsp. plantarum).